Consider the following 258-residue polypeptide: uncharacterized protein (258 aa).

Positions 40-54 (AQKTDTPLDSSSYAV) are enriched in polar residues. The interval 40-63 (AQKTDTPLDSSSYAVTSPEEAPNE) is disordered.

This is an uncharacterized protein from Treponema pallidum (strain Nichols).